The sequence spans 260 residues: UPF0246 protein Veis_4789 (260 aa).

The protein belongs to the UPF0246 family.

This chain is UPF0246 protein Veis_4789, found in Verminephrobacter eiseniae (strain EF01-2).